The primary structure comprises 303 residues: Inosose dehydratase (303 aa).

The protein belongs to the IolE/MocC family. Glutathione is required as a cofactor. The cofactor is Co(2+). Mn(2+) serves as cofactor.

The catalysed reaction is scyllo-inosose = 3D-3,5/4-trihydroxycyclohexane-1,2-dione + H2O. It functions in the pathway polyol metabolism; myo-inositol degradation into acetyl-CoA; acetyl-CoA from myo-inositol: step 2/7. Its function is as follows. Catalyzes the dehydration of inosose (2-keto-myo-inositol, 2KMI or 2,4,6/3,5-pentahydroxycyclohexanone) to 3D-(3,5/4)-trihydroxycyclohexane-1,2-dione (D-2,3-diketo-4-deoxy-epi-inositol). This Halalkalibacterium halodurans (strain ATCC BAA-125 / DSM 18197 / FERM 7344 / JCM 9153 / C-125) (Bacillus halodurans) protein is Inosose dehydratase.